A 423-amino-acid chain; its full sequence is Histidine--tRNA ligase (423 aa).

The protein belongs to the class-II aminoacyl-tRNA synthetase family. In terms of assembly, homodimer.

Its subcellular location is the cytoplasm. The enzyme catalyses tRNA(His) + L-histidine + ATP = L-histidyl-tRNA(His) + AMP + diphosphate + H(+). The protein is Histidine--tRNA ligase of Anoxybacillus flavithermus (strain DSM 21510 / WK1).